The following is a 204-amino-acid chain: UPF0301 protein Mflv_0850 (204 aa).

It belongs to the UPF0301 (AlgH) family.

This chain is UPF0301 protein Mflv_0850, found in Mycolicibacterium gilvum (strain PYR-GCK) (Mycobacterium gilvum (strain PYR-GCK)).